The primary structure comprises 521 residues: Exodeoxyribonuclease 7 large subunit (521 aa).

The interval 494 to 521 (ATSGAARPKPAAKPSTKAKEPGNQGSLF) is disordered. Low complexity predominate over residues 498–508 (AARPKPAAKPS).

It belongs to the XseA family. As to quaternary structure, heterooligomer composed of large and small subunits.

The protein resides in the cytoplasm. The catalysed reaction is Exonucleolytic cleavage in either 5'- to 3'- or 3'- to 5'-direction to yield nucleoside 5'-phosphates.. Functionally, bidirectionally degrades single-stranded DNA into large acid-insoluble oligonucleotides, which are then degraded further into small acid-soluble oligonucleotides. This chain is Exodeoxyribonuclease 7 large subunit, found in Mesorhizobium japonicum (strain LMG 29417 / CECT 9101 / MAFF 303099) (Mesorhizobium loti (strain MAFF 303099)).